Here is a 318-residue protein sequence, read N- to C-terminus: Putative S-adenosyl-L-methionine-dependent methyltransferase MMAR_1595 (318 aa).

S-adenosyl-L-methionine is bound by residues E132 and 161–162; that span reads DL.

Belongs to the UPF0677 family.

In terms of biological role, exhibits S-adenosyl-L-methionine-dependent methyltransferase activity. This chain is Putative S-adenosyl-L-methionine-dependent methyltransferase MMAR_1595, found in Mycobacterium marinum (strain ATCC BAA-535 / M).